Consider the following 516-residue polypeptide: MKRSISFRPTLLALVLATNFPVAHAAVPKDMLVIGKAADPQTLDPAVTIDNNDWTVTYPSYQRLVQYKTDGDKGSTDVEGDLASSWKASDDQKEWTFTLKDNAKFADGTPVTAEAVKLSFERLLKIGQGPAEAFPKDLKIDAPDEHTVKFTLSQPFAPFLYTLANDGASIINPAVLKEHAADDARGFLAQNTAGSGPFMLKSWQKGQQLVLVPNPHYPGNKPNFKRVSVKIIGESASRRLQLSRGDIDIADALPVDQLNALKQENKVNVAEYPSLRVTYLYLNNSKAPLNQADLRRAISWSTDYQGMVNGILSGNGKQMRGPIPEGMWGYDATAMQYNHDETKAKAEWDKVTSKPTSLTFLYSDNDPNWEPIALATQSSLNKLGIIVKLEKLANATMRDRVGKGDYDIAIGNWSPDFADPYMFMNYWFESDKKGLPGNRSFYENSEVDKLLRNALATTDQTQRTRDYQQAQKIVIDDAAYVYLFQKNYQLAMNKEVKGFVFNPMLEQVFNINTMSK.

Residues 1-25 form the signal peptide; it reads MKRSISFRPTLLALVLATNFPVAHA.

This sequence belongs to the bacterial solute-binding protein 5 family. The complex is composed of two ATP-binding proteins (DdpD and DdpF), two transmembrane proteins (DdpB and DdpC) and a solute-binding protein (DdpA).

Its subcellular location is the periplasm. Part of the ABC transporter complex DdpABCDF, which is probably involved in D,D-dipeptide transport. This chain is Probable D,D-dipeptide-binding periplasmic protein DdpA (ddpA), found in Escherichia coli (strain K12).